The following is a 331-amino-acid chain: Ketol-acid reductoisomerase (NADP(+)) (331 aa).

Residues 3–183 (AQMYYDDDAD…GGTRAGALKT (181 aa)) enclose the KARI N-terminal Rossmann domain. NADP(+) contacts are provided by residues 26 to 29 (YGSQ), serine 52, and serine 54. Residue histidine 109 is part of the active site. Residue glycine 135 coordinates NADP(+). The 146-residue stretch at 184–329 (TFKEETETDL…TELRSLMSWL (146 aa)) folds into the KARI C-terminal knotted domain. Residues aspartate 192, glutamate 196, glutamate 228, and glutamate 232 each contribute to the Mg(2+) site. Residue serine 253 coordinates substrate.

Belongs to the ketol-acid reductoisomerase family. The cofactor is Mg(2+).

It catalyses the reaction (2R)-2,3-dihydroxy-3-methylbutanoate + NADP(+) = (2S)-2-acetolactate + NADPH + H(+). The catalysed reaction is (2R,3R)-2,3-dihydroxy-3-methylpentanoate + NADP(+) = (S)-2-ethyl-2-hydroxy-3-oxobutanoate + NADPH + H(+). It functions in the pathway amino-acid biosynthesis; L-isoleucine biosynthesis; L-isoleucine from 2-oxobutanoate: step 2/4. Its pathway is amino-acid biosynthesis; L-valine biosynthesis; L-valine from pyruvate: step 2/4. In terms of biological role, involved in the biosynthesis of branched-chain amino acids (BCAA). Catalyzes an alkyl-migration followed by a ketol-acid reduction of (S)-2-acetolactate (S2AL) to yield (R)-2,3-dihydroxy-isovalerate. In the isomerase reaction, S2AL is rearranged via a Mg-dependent methyl migration to produce 3-hydroxy-3-methyl-2-ketobutyrate (HMKB). In the reductase reaction, this 2-ketoacid undergoes a metal-dependent reduction by NADPH to yield (R)-2,3-dihydroxy-isovalerate. The protein is Ketol-acid reductoisomerase (NADP(+)) of Thermobifida fusca (strain YX).